The primary structure comprises 107 residues: ATP-dependent Clp protease adapter protein ClpS (107 aa).

Positions 1-12 (MSGDKDFDKDSD) are enriched in basic and acidic residues. The interval 1 to 21 (MSGDKDFDKDSDVTVITRTTP) is disordered.

The protein belongs to the ClpS family. Binds to the N-terminal domain of the chaperone ClpA.

Functionally, involved in the modulation of the specificity of the ClpAP-mediated ATP-dependent protein degradation. The protein is ATP-dependent Clp protease adapter protein ClpS of Zymomonas mobilis subsp. mobilis (strain ATCC 31821 / ZM4 / CP4).